The following is a 553-amino-acid chain: ATP synthase F(1) complex subunit alpha, mitochondrial (553 aa).

Residues 1 to 43 (MLSVRVAAAVVRALPRRAGLVSRNALGSSFIAARNFHASNTHL) constitute a mitochondrion transit peptide. Residues Ser-53 and Ser-65 each carry the phosphoserine modification. A Phosphoserine; alternate modification is found at Ser-76. The O-linked (GlcNAc) serine; alternate glycan is linked to Ser-76. Ser-106 carries the post-translational modification Phosphoserine. N6-acetyllysine occurs at positions 123, 126, and 132. The residue at position 134 (Thr-134) is a Phosphothreonine. N6-acetyllysine; alternate is present on Lys-161. An N6-succinyllysine; alternate modification is found at Lys-161. Residue Ser-166 is modified to Phosphoserine. An N6-acetyllysine; alternate modification is found at Lys-167. Lys-167 bears the N6-succinyllysine; alternate mark. A Phosphoserine modification is found at Ser-184. Omega-N-methylarginine is present on Arg-204. ATP contacts are provided by Gln-215, Gly-217, Lys-218, Thr-219, and Ser-220. Thr-219 is a binding site for Mg(2+). An N6-acetyllysine; alternate mark is found at Lys-230 and Lys-239. An N6-succinyllysine; alternate mark is found at Lys-230 and Lys-239. Lys-240 carries the N6-acetyllysine modification. An N6-acetyllysine; alternate mark is found at Lys-261 and Lys-305. An N6-succinyllysine; alternate mark is found at Lys-261 and Lys-305. Residue Asp-312 participates in Mg(2+) binding. Lys-427 is subject to N6-acetyllysine; alternate. Lys-427 carries the N6-succinyllysine; alternate modification. Lys-434 carries the N6-acetyllysine modification. ATP is bound by residues Gln-473 and Gln-475. An N6-acetyllysine; alternate mark is found at Lys-498, Lys-506, Lys-531, and Lys-539. Residues Lys-498, Lys-506, Lys-531, and Lys-539 each carry the N6-succinyllysine; alternate modification. N6-acetyllysine is present on Lys-541.

It belongs to the ATPase alpha/beta chains family. In terms of assembly, homotrimer. Component of the ATP synthase complex composed at least of ATP5F1A/subunit alpha, ATP5F1B/subunit beta, ATP5MC1/subunit c (homooctomer), MT-ATP6/subunit a, MT-ATP8/subunit 8, ATP5ME/subunit e, ATP5MF/subunit f, ATP5MG/subunit g, ATP5MK/subunit k, ATP5MJ/subunit j, ATP5F1C/subunit gamma, ATP5F1D/subunit delta, ATP5F1E/subunit epsilon, ATP5PF/subunit F6, ATP5PB/subunit b, ATP5PD/subunit d, ATP5PO/subunit OSCP. ATP synthase complex consists of a soluble F(1) head domain (subunits alpha(3) and beta(3)) - the catalytic core - and a membrane F(0) domain - the membrane proton channel (subunits c, a, 8, e, f, g, k and j). These two domains are linked by a central stalk (subunits gamma, delta, and epsilon) rotating inside the F1 region and a stationary peripheral stalk (subunits F6, b, d, and OSCP). Interacts with ATPAF2. Interacts with HRG; the interaction occurs on the surface of T-cells and alters the cell morphology when associated with concanavalin (in vitro). Interacts with PLG (angiostatin peptide); the interaction inhibits most of the angiogenic properties of angiostatin. Interacts with BLOC1S1. Interacts with BCL2L1 isoform BCL-X(L); the interaction mediates the association of BCL2L1 isoform BCL-X(L) with the mitochondrial membrane F(1)F(0) ATP synthase and enhances neurons metabolic efficiency. Interacts with CLN5 and PPT1. Interacts with S100A1; this interaction increases F1-ATPase activity. Interacts with ABCB7; this interaction allows the regulation of cellular iron homeostasis and cellular reactive oxygen species (ROS) levels in cardiomyocytes. In terms of processing, acetylated on lysine residues. BLOC1S1 is required for acetylation.

Its subcellular location is the mitochondrion inner membrane. It is found in the cell membrane. Its function is as follows. Subunit alpha, of the mitochondrial membrane ATP synthase complex (F(1)F(0) ATP synthase or Complex V) that produces ATP from ADP in the presence of a proton gradient across the membrane which is generated by electron transport complexes of the respiratory chain. ATP synthase complex consist of a soluble F(1) head domain - the catalytic core - and a membrane F(1) domain - the membrane proton channel. These two domains are linked by a central stalk rotating inside the F(1) region and a stationary peripheral stalk. During catalysis, ATP synthesis in the catalytic domain of F(1) is coupled via a rotary mechanism of the central stalk subunits to proton translocation. In vivo, can only synthesize ATP although its ATP hydrolase activity can be activated artificially in vitro. With the catalytic subunit beta (ATP5F1B), forms the catalytic core in the F(1) domain. Subunit alpha does not bear the catalytic high-affinity ATP-binding sites. The sequence is that of ATP synthase F(1) complex subunit alpha, mitochondrial from Pan troglodytes (Chimpanzee).